A 196-amino-acid chain; its full sequence is Chromophore lyase CpcS/CpeS 2 (196 aa).

This sequence belongs to the CpcS/CpeS biliprotein lyase family.

Its function is as follows. Covalently attaches a chromophore to Cys residue(s) of phycobiliproteins. This Trichodesmium erythraeum (strain IMS101) protein is Chromophore lyase CpcS/CpeS 2.